Consider the following 466-residue polypeptide: Soluble pyridine nucleotide transhydrogenase (466 aa).

36–45 (ERYQNVGGGC) lines the FAD pocket.

It belongs to the class-I pyridine nucleotide-disulfide oxidoreductase family. Homooligomer; probable homooctamer. FAD serves as cofactor.

The protein resides in the cytoplasm. It catalyses the reaction NAD(+) + NADPH = NADH + NADP(+). Its function is as follows. Conversion of NADPH, generated by peripheral catabolic pathways, to NADH, which can enter the respiratory chain for energy generation. This Escherichia coli O6:H1 (strain CFT073 / ATCC 700928 / UPEC) protein is Soluble pyridine nucleotide transhydrogenase.